Reading from the N-terminus, the 306-residue chain is Ornithine carbamoyltransferase, anabolic (306 aa).

Residues 46-49 (STRT), Q73, R97, and 124-127 (HPTQ) contribute to the carbamoyl phosphate site. L-ornithine is bound by residues N156, D220, and 224–225 (SM). Carbamoyl phosphate-binding positions include 260–261 (CL) and R288.

The protein belongs to the aspartate/ornithine carbamoyltransferase superfamily. OTCase family. In terms of assembly, homohexamer; dimer of trimers.

It localises to the cytoplasm. The enzyme catalyses carbamoyl phosphate + L-ornithine = L-citrulline + phosphate + H(+). It participates in amino-acid biosynthesis; L-arginine biosynthesis; L-arginine from L-ornithine and carbamoyl phosphate: step 1/3. Functionally, reversibly catalyzes the transfer of the carbamoyl group from carbamoyl phosphate (CP) to the N(epsilon) atom of ornithine (ORN) to produce L-citrulline, which is a substrate for argininosuccinate synthetase (ArgG) involved in the final step in arginine biosynthesis. In Campylobacter jejuni subsp. jejuni serotype O:2 (strain ATCC 700819 / NCTC 11168), this protein is Ornithine carbamoyltransferase, anabolic.